The chain runs to 593 residues: Ribonuclease Y (593 aa).

A helical membrane pass occupies residues 6-26 (ILLMYLIVGLLTALTVLIFVF). A KH domain is found at 218-278 (DPIKVKKVTD…IKLEVAYNAL (61 aa)). An HD domain is found at 354-464 (VLTHSIEAAQ…TKIADFLSAA (111 aa)).

The protein belongs to the RNase Y family.

Its subcellular location is the cell membrane. Functionally, endoribonuclease that initiates mRNA decay. The sequence is that of Ribonuclease Y from Mycoplasmoides gallisepticum (strain R(low / passage 15 / clone 2)) (Mycoplasma gallisepticum).